The chain runs to 1508 residues: MVGMLFVWQTFLFVWACAAAVEVGEKPRPVIDIVRDVDNLGSIWQFKGTNTLIRHQGREILVRHGGDQWSTVKKFDQGVNTVEVDPYYPERRAFAWLENNELYKTDDCGKTWARVMHVEAEPGENLQRYSVYSNPDNYKYLMVTSHFERKDSSPVLAESYEKQWVSQDGGKTIAPLGHPDPGVYRLCHFLRQARNHDVAKDSTILCIEHDAQKHTAVLYRTDDFGKSKQALDSFDDEIVSSVGLLGKYILVTTTEDAYNKHAVQHVWVSRDGDKFQKIIFPTHIRDNFFRAVTTSTGNQIIFSIPAGKHSHSRKNALYANYISDSSGIQFHAVADSLDERYKELGPVMALDANGTLSMVARKSSTEDQVTLLSYDYGYSWQPMHLAEGEDHKALGCSKGGKECELPVQLSQLVSSSGLVGHGESATSGILMGIVLKKRGSRGPRKHKYLSVISRDYGLTWSVAFEYPVLSFAGNYGNILLACPYNPGDDGDPEEEIYYSLDQGHTWEEHHIEGKYEFVRVHSAISDGSSTAFSFLAVGDDQNTIVVDCIFTDIHNGKECTDGDMEEYKLRNGNCLNGARYTINKRKSEAACLLKNDPSVINPLVKPCDCTNADYECSLGFLGLPDKGCTADLGMLRSAGACKDNPRELMPMHKIKGNECTKDLNIEPVKVDCSAVQNRPDIEVTAHVFKTQFETYQYFNSAEDDSLMVLTKDKRALISHDSGKTFKMLDTLGSGAELITFNRYFGDLAYIFASDDVLYITDDRGYHFYAVDLPEVRHLFLPLAFHAKDNQTFIYFGGKDCEKLGPKCHSTAYITTDGGRNFREMLTGAVSCEFVGSIYSHPANKDMIMCEIENKKERRNILLRSTDEFRTSDKVFDSIIGFHTTGDFTAIAVSEGRQQVSSYLTIDGVHFNESRFPPDFVAPEKQQSYSVLSAHEGAIFLHMSKSLVKHKEYGTLVKSDSNGIDFVVLKDGVNSNAEGLVDFETPEGLDGVILINVVENLDQVQKGKAKAKHLKTAISFNDGVDWKYLSPPGKDSSGKKYPCHGKNRAKCSLNLHGYTERKDLRDTYSSGSAIGYMLGVGNVGEHLLPYEQCSTFLTTDGGVTWTEVKSTPHQWEFGDRGSIIVLVPDGVKTNSITYSVDAGRSWQDFKFADEEVIIDDIITVPYDTSMRFLLISKEHLRGKSKTYAISFAHIFKRQCEFHPGGGRHNGDFEYTSIKHPDYKCLFGKEVEFLKRIKYDCFIGNASYTKDYRTSRICPCTRQDFECDYNYIRTSDGTCKLPSGVKPEAPSAVCERNRDLVEYFQPTGYRKIPLSKCEGGLKLQRTDSPHPCPGKEKEFYEKYPSSTNASSVVFWWLLLTMVLLVPLWVIYDRGIRRNGGFSRFGEIRLDDDDLIEENGLDRAINKVVKVGAYGVAGLFGFLLLLKSKAGARIRRFRESVSSRRGPSYSSLISDQFLDDANDLLVGHDNDANNLNAFLDEDGQHFDVDDEIEGADQASYHDDVDLGRTSE.

An N-terminal signal peptide occupies residues 1 to 20 (MVGMLFVWQTFLFVWACAAA). The Lumenal portion of the chain corresponds to 21 to 1348 (VEVGEKPRPV…EKYPSSTNAS (1328 aa)). A BNR 1 repeat occupies 164 to 172 (WVSQDGGKT). N-linked (GlcNAc...) asparagine glycosylation is present at N353. BNR repeat units follow at residues 372–381 (LSYDYGYSWQ), 452–461 (ISRDYGLTWS), 497–507 (YYSLDQGHTWE), and 717–726 (ISHDSGKTFK). N789 is a glycosylation site (N-linked (GlcNAc...) asparagine). The stretch at 812–822 (YITTDGGRNFR) is one BNR 6 repeat. Residue N911 is glycosylated (N-linked (GlcNAc...) asparagine). BNR repeat units lie at residues 1095–1105 (FLTTDGGVTWT) and 1137–1146 (YSVDAGRSWQ). N-linked (GlcNAc...) asparagine glycans are attached at residues N1243 and N1346. The helical transmembrane segment at 1349–1369 (SVVFWWLLLTMVLLVPLWVIY) threads the bilayer. The Cytoplasmic segment spans residues 1370–1404 (DRGIRRNGGFSRFGEIRLDDDDLIEENGLDRAINK). A helical transmembrane segment spans residues 1405-1425 (VVKVGAYGVAGLFGFLLLLKS). Over 1426–1508 (KAGARIRRFR…DDVDLGRTSE (83 aa)) the chain is Lumenal.

It belongs to the VPS10-related sortilin family.

It is found in the golgi apparatus. The protein resides in the trans-Golgi network membrane. It localises to the prevacuolar compartment membrane. Functionally, functions as a sorting receptor in the Golgi compartment required for the intracellular sorting and delivery of soluble vacuolar proteins, like carboxypeptidase Y (CPY) and proteinase A. Executes multiple rounds of sorting by cycling between the late Golgi and a prevacuolar endosome-like compartment. This is Vacuolar protein sorting/targeting protein 10 (VPS10) from Eremothecium gossypii (strain ATCC 10895 / CBS 109.51 / FGSC 9923 / NRRL Y-1056) (Yeast).